The following is a 546-amino-acid chain: RuBisCO large subunit-binding protein subunit alpha, chloroplastic (546 aa).

A chloroplast-targeting transit peptide spans 1–6; sequence RFSVRA. Serine 50 carries the phosphoserine modification.

This sequence belongs to the chaperonin (HSP60) family. In terms of assembly, oligomer of probably six alpha and six beta subunits.

The protein resides in the plastid. It is found in the chloroplast. Functionally, this protein binds RuBisCO small and large subunits and is implicated in the assembly of the enzyme oligomer. This is RuBisCO large subunit-binding protein subunit alpha, chloroplastic from Brassica napus (Rape).